The primary structure comprises 340 residues: NADH-quinone oxidoreductase subunit H (340 aa).

Helical transmembrane passes span 9–29, 81–101, 113–133, 158–178, 184–204, 221–240, 245–264, 273–293, and 316–336; these read IWIIIKIVLILVPLLVAVAFI, LIAPILSLVPALAAWAVIPFA, LLFLFAMTSLGVYGILVAGWA, GFALVGVLLAAGTMNLQGIVL, LWHWFWLPLLPLFVTYWITAV, IVAGFHVEYAGVTFALFFLA, MVLVSAIATVIFLGGWLSPF, LFAWVPGIVWFVLKLSLFIFT, and VLIPVTLVWIIILALAIEFHW.

The protein belongs to the complex I subunit 1 family. As to quaternary structure, NDH-1 is composed of 14 different subunits. Subunits NuoA, H, J, K, L, M, N constitute the membrane sector of the complex.

The protein resides in the cell inner membrane. It catalyses the reaction a quinone + NADH + 5 H(+)(in) = a quinol + NAD(+) + 4 H(+)(out). NDH-1 shuttles electrons from NADH, via FMN and iron-sulfur (Fe-S) centers, to quinones in the respiratory chain. The immediate electron acceptor for the enzyme in this species is believed to be ubiquinone. Couples the redox reaction to proton translocation (for every two electrons transferred, four hydrogen ions are translocated across the cytoplasmic membrane), and thus conserves the redox energy in a proton gradient. This subunit may bind ubiquinone. This chain is NADH-quinone oxidoreductase subunit H, found in Coxiella burnetii (strain CbuK_Q154) (Coxiella burnetii (strain Q154)).